The chain runs to 473 residues: 7-dehydrocholesterol reductase (473 aa).

Residues 1–20 (MGERRRANASRGDKKVANGE) are disordered. The next 6 helical transmembrane spans lie at 36–56 (FSLASVIFLLAFAPLIVYYFV), 97–117 (IYLAWVSFQVFLYMFLPDILH), 175–195 (WIPLLWCANLLGYSVATFALV), 264–284 (VTNSMILVNVLQAIYVVDFFW), 304–324 (LGWGDCVWLPYLYTLQGLYLV), and 329–349 (ELSTTAAVAVLLLGLIGYYIF). NADP(+) contacts are provided by residues lysine 356, arginine 360, methionine 393, tryptophan 398, and 405-406 (NY). The chain crosses the membrane as a helical span at residues 419-439 (ACGFDHLLPYFYFIYMTILLV). Residues aspartate 445, 449–453 (CSSKY), and tyrosine 460 each bind NADP(+).

It belongs to the ERG4/ERG24 family.

Its subcellular location is the endoplasmic reticulum membrane. It carries out the reaction cholesterol + NADP(+) = 7-dehydrocholesterol + NADPH + H(+). The enzyme catalyses 7-dehydrodesmosterol + NADPH + H(+) = desmosterol + NADP(+). Its pathway is steroid biosynthesis; cholesterol biosynthesis. Catalyzes the last step of the cholesterol synthesis pathway, which transforms cholesta-5,7-dien-3beta-ol (7-dehydrocholesterol,7-DHC) into cholesterol by reducing the C7-C8 double bond of its sterol core. Can also metabolize cholesta-5,7,24-trien-3beta-ol (7-dehydrodemosterol, 7-DHD) to desmosterol, which is then metabolized by the Delta(24)-sterol reductase (DHCR24) to cholesterol. Modulates ferroptosis (a form of regulated cell death driven by iron-dependent lipid peroxidation) through the metabolic breakdown of the anti-ferroptotic metabolites 7-DHC and 7-DHD which, when accumulated, divert the propagation of peroxyl radical-mediated damage from phospholipid components to its sterol core, protecting plasma and mitochondrial membranes from phospholipid autoxidation. In Xenopus laevis (African clawed frog), this protein is 7-dehydrocholesterol reductase (dhcr7).